The following is a 71-amino-acid chain: Biotinylated protein TB7.3 homolog (71 aa).

One can recognise a Biotinyl-binding domain in the interval 2–71 (AEDVRAEIVA…QAGHLIAVID (70 aa)). At Lys-37 the chain carries N6-biotinyllysine.

The sequence is that of Biotinylated protein TB7.3 homolog from Mycolicibacterium smegmatis (strain ATCC 700084 / mc(2)155) (Mycobacterium smegmatis).